Reading from the N-terminus, the 98-residue chain is Protein translation factor SUI1 homolog (98 aa).

It belongs to the SUI1 family.

The polypeptide is Protein translation factor SUI1 homolog (Pyrococcus abyssi (strain GE5 / Orsay)).